A 479-amino-acid polypeptide reads, in one-letter code: Deoxyribodipyrimidine photo-lyase (479 aa).

Residues 6–137 (SLKAVWFRRD…PFYTFEDAYL (132 aa)) enclose the Photolyase/cryptochrome alpha/beta domain. Tyr229 provides a ligand contact to FAD. Arg233 contacts DNA. FAD is bound by residues 241-245 (TSRLS) and 278-285 (ELAWRDFY). Interaction with DNA regions lie at residues 278–285 (ELAWRDFY) and 344–345 (NR). Residue 375 to 377 (DYD) coordinates FAD. Gln407 serves as a coordination point for DNA.

It belongs to the DNA photolyase class-1 family. Monomer. It depends on FAD as a cofactor. The cofactor is (6R)-5,10-methylene-5,6,7,8-tetrahydrofolate.

It catalyses the reaction cyclobutadipyrimidine (in DNA) = 2 pyrimidine residues (in DNA).. In terms of biological role, involved in repair of UV radiation-induced DNA damage. Catalyzes the light-dependent monomerization (300-600 nm) of cyclobutyl pyrimidine dimers (in cis-syn configuration), which are formed between adjacent bases on the same DNA strand upon exposure to ultraviolet radiation. The protein is Deoxyribodipyrimidine photo-lyase (phr) of Alkalihalophilus pseudofirmus (strain ATCC BAA-2126 / JCM 17055 / OF4) (Bacillus pseudofirmus).